The sequence spans 220 residues: uncharacterized protein (220 aa).

A helical transmembrane segment spans residues 20–42 (FFKKLVPIIIIISIVVITIMVII).

The protein resides in the membrane. This is an uncharacterized protein from Rickettsia prowazekii (strain Madrid E).